A 321-amino-acid chain; its full sequence is tRNA(Ile)-lysidine synthase (321 aa).

Position 21-26 (Ser-21–Ser-26) interacts with ATP.

The protein belongs to the tRNA(Ile)-lysidine synthase family.

It is found in the cytoplasm. It carries out the reaction cytidine(34) in tRNA(Ile2) + L-lysine + ATP = lysidine(34) in tRNA(Ile2) + AMP + diphosphate + H(+). Ligates lysine onto the cytidine present at position 34 of the AUA codon-specific tRNA(Ile) that contains the anticodon CAU, in an ATP-dependent manner. Cytidine is converted to lysidine, thus changing the amino acid specificity of the tRNA from methionine to isoleucine. In Campylobacter jejuni subsp. jejuni serotype O:2 (strain ATCC 700819 / NCTC 11168), this protein is tRNA(Ile)-lysidine synthase.